We begin with the raw amino-acid sequence, 326 residues long: Holliday junction branch migration complex subunit RuvB (326 aa).

Residues 1-180 form a large ATPase domain (RuvB-L) region; it reads MKSISCGKEY…FGIPLHLEFY (180 aa). ATP contacts are provided by residues I19, R20, G61, K64, T65, T66, 127 to 129, R170, Y180, and R217; that span reads EDF. T65 contributes to the Mg(2+) binding site. The tract at residues 181–251 is small ATPAse domain (RuvB-S); the sequence is SFEELVNIIK…VADSVLLKLG (71 aa). The head domain (RuvB-H) stretch occupies residues 254-326; sequence KMGLNKLDMN…QAKEYLSFQH (73 aa). R307 and R312 together coordinate DNA.

The protein belongs to the RuvB family. In terms of assembly, homohexamer. Forms an RuvA(8)-RuvB(12)-Holliday junction (HJ) complex. HJ DNA is sandwiched between 2 RuvA tetramers; dsDNA enters through RuvA and exits via RuvB. An RuvB hexamer assembles on each DNA strand where it exits the tetramer. Each RuvB hexamer is contacted by two RuvA subunits (via domain III) on 2 adjacent RuvB subunits; this complex drives branch migration. In the full resolvosome a probable DNA-RuvA(4)-RuvB(12)-RuvC(2) complex forms which resolves the HJ.

The protein localises to the cytoplasm. It catalyses the reaction ATP + H2O = ADP + phosphate + H(+). Functionally, the RuvA-RuvB-RuvC complex processes Holliday junction (HJ) DNA during genetic recombination and DNA repair, while the RuvA-RuvB complex plays an important role in the rescue of blocked DNA replication forks via replication fork reversal (RFR). RuvA specifically binds to HJ cruciform DNA, conferring on it an open structure. The RuvB hexamer acts as an ATP-dependent pump, pulling dsDNA into and through the RuvAB complex. RuvB forms 2 homohexamers on either side of HJ DNA bound by 1 or 2 RuvA tetramers; 4 subunits per hexamer contact DNA at a time. Coordinated motions by a converter formed by DNA-disengaged RuvB subunits stimulates ATP hydrolysis and nucleotide exchange. Immobilization of the converter enables RuvB to convert the ATP-contained energy into a lever motion, pulling 2 nucleotides of DNA out of the RuvA tetramer per ATP hydrolyzed, thus driving DNA branch migration. The RuvB motors rotate together with the DNA substrate, which together with the progressing nucleotide cycle form the mechanistic basis for DNA recombination by continuous HJ branch migration. Branch migration allows RuvC to scan DNA until it finds its consensus sequence, where it cleaves and resolves cruciform DNA. The polypeptide is Holliday junction branch migration complex subunit RuvB (Wolbachia pipientis wMel).